A 203-amino-acid chain; its full sequence is Outer-membrane lipoprotein carrier protein (203 aa).

Residues 1–21 (MKKLAITCALLSGMVVSQVWA) form the signal peptide.

This sequence belongs to the LolA family. In terms of assembly, monomer.

The protein localises to the periplasm. Functionally, participates in the translocation of lipoproteins from the inner membrane to the outer membrane. Only forms a complex with a lipoprotein if the residue after the N-terminal Cys is not an aspartate (The Asp acts as a targeting signal to indicate that the lipoprotein should stay in the inner membrane). In Klebsiella pneumoniae subsp. pneumoniae (strain ATCC 700721 / MGH 78578), this protein is Outer-membrane lipoprotein carrier protein.